Here is a 143-residue protein sequence, read N- to C-terminus: Ayaconin (143 aa).

Positions 1-22 are cleaved as a signal peptide; it reads MSFLFFLVVLISIGLWVGPCVA.

Interacts with human F12 (inactive). As to expression, salivary gland.

The protein localises to the secreted. Inhibits the intrinsic blood coagulation pathway in the host by blocking activation of host coagulation factor XII (F12). In Lutzomyia ayacuchensis (Sand fly), this protein is Ayaconin.